The chain runs to 553 residues: uncharacterized protein (553 aa).

The next 2 helical transmembrane spans lie at 6–26 and 524–544; these read IKIFLISLIFISGVYALQVDA and SYWILGIIVVIAIVLVVGYVF.

The protein to M.jannaschii MJ0795 and MJ1506.

The protein resides in the cell membrane. This is an uncharacterized protein from Methanocaldococcus jannaschii (strain ATCC 43067 / DSM 2661 / JAL-1 / JCM 10045 / NBRC 100440) (Methanococcus jannaschii).